Reading from the N-terminus, the 234-residue chain is UPF0173 metal-dependent hydrolase Smed_0942 (234 aa).

The protein belongs to the UPF0173 family.

The chain is UPF0173 metal-dependent hydrolase Smed_0942 from Sinorhizobium medicae (strain WSM419) (Ensifer medicae).